Consider the following 75-residue polypeptide: Putative sulfur carrier protein MJ0990 (75 aa).

Catalysis depends on C15, which acts as the Cysteine persulfide intermediate.

The protein belongs to the sulfur carrier protein TusA family.

This is Putative sulfur carrier protein MJ0990 from Methanocaldococcus jannaschii (strain ATCC 43067 / DSM 2661 / JAL-1 / JCM 10045 / NBRC 100440) (Methanococcus jannaschii).